A 348-amino-acid chain; its full sequence is Ephrin-4 (348 aa).

The N-terminal stretch at 1-20 (MKQFFEFLITTFLLLGLAAA) is a signal peptide. Residues 21–178 (DEHIVYWNST…SQNMRLSMKV (158 aa)) enclose the Ephrin RBD domain. N28 is a glycosylation site (N-linked (GlcNAc...) asparagine). Intrachain disulfides connect C53–C91 and C79–C167. N-linked (GlcNAc...) asparagine glycosylation occurs at N157. The disordered stretch occupies residues 207–237 (GGQEDEDSDNDNAHLLPRDLEGSTNPKFRRP). S329 carries the GPI-anchor amidated serine lipid modification. A propeptide spans 330–348 (STSLSTNFAILLAVIYVLY) (removed in mature form).

It belongs to the ephrin family. As to quaternary structure, interacts with lat-2. May undergo proteolysis by metalloprotease sup-17 to give rise to a soluble form.

The protein localises to the cell membrane. Functionally, regulates the formation or stabilization of cell-cell contacts at several stages of epithelial morphogenesis. In early embryonic development, involved in ventral closure of the epidermis. During male tail morphogenesis, regulates precursor cell sorting together with mab-20 and allows the formation of distinct sensory rays. Probably acts as a ligand for lad-2 to regulate axon guidance of several neurons including SDQL, SDQR, SMD and PLN neurons during neurogenesis. In Caenorhabditis elegans, this protein is Ephrin-4 (efn-4).